A 297-amino-acid chain; its full sequence is Transcription factor bHLH129 (297 aa).

The interval 1–145 is disordered; sequence MYPPNSSKST…SSSHQEHNSL (145 aa). Serine 35 carries the post-translational modification Phosphoserine. Positions 68 to 82 are enriched in low complexity; that stretch reads SSIGFDSNASSSSSL. Gly residues predominate over residues 111–121; it reads PNGGYGGGGEQ. Residue serine 138 is modified to Phosphoserine. Residues 239 to 289 form the bHLH domain; that stretch reads FATHPRSIAERERRTRISGKLKKLQELVPNMDKQTSYADMLDLAVEHIKGL.

Homodimer.

Its subcellular location is the nucleus. This Arabidopsis thaliana (Mouse-ear cress) protein is Transcription factor bHLH129 (BHLH129).